Consider the following 264-residue polypeptide: Thymidylate synthase (264 aa).

Arginine 21 contributes to the dUMP binding site. Histidine 51 is a (6R)-5,10-methylene-5,6,7,8-tetrahydrofolate binding site. 126 to 127 contacts dUMP; it reads RR. The Nucleophile role is filled by cysteine 146. DUMP-binding positions include 166-169, asparagine 177, and 207-209; these read RSCD and HLY. Position 169 (aspartate 169) interacts with (6R)-5,10-methylene-5,6,7,8-tetrahydrofolate. Serine 263 provides a ligand contact to (6R)-5,10-methylene-5,6,7,8-tetrahydrofolate.

The protein belongs to the thymidylate synthase family. Bacterial-type ThyA subfamily. Homodimer.

Its subcellular location is the cytoplasm. The catalysed reaction is dUMP + (6R)-5,10-methylene-5,6,7,8-tetrahydrofolate = 7,8-dihydrofolate + dTMP. It participates in pyrimidine metabolism; dTTP biosynthesis. Catalyzes the reductive methylation of 2'-deoxyuridine-5'-monophosphate (dUMP) to 2'-deoxythymidine-5'-monophosphate (dTMP) while utilizing 5,10-methylenetetrahydrofolate (mTHF) as the methyl donor and reductant in the reaction, yielding dihydrofolate (DHF) as a by-product. This enzymatic reaction provides an intracellular de novo source of dTMP, an essential precursor for DNA biosynthesis. The sequence is that of Thymidylate synthase from Buchnera aphidicola subsp. Acyrthosiphon pisum (strain Tuc7).